The chain runs to 213 residues: Endoplasmic reticulum vesicle protein 25 (213 aa).

An N-terminal signal peptide occupies residues 1 to 20; that stretch reads MILRIPSLLYLFTLLTAVYA. At 21–181 the chain is on the lumenal side; sequence VKFDLTSDRN…TNESTNQRVK (161 aa). The 90-residue stretch at 33 to 122 folds into the GOLD domain; the sequence is PKCIWNFASA…VRSVELDVDI (90 aa). A helical transmembrane segment spans residues 182-202; the sequence is VFSVLIICCTIGLGVWQLLHL. At 203–213 the chain is on the cytoplasmic side; sequence RSFFKRKYLID.

This sequence belongs to the EMP24/GP25L family.

It localises to the endoplasmic reticulum membrane. Its subcellular location is the golgi apparatus membrane. Its function is as follows. Constituent of COPII-coated endoplasmic reticulum-derived transport vesicles. Required for efficient transport of a subset of secretory proteins to the Golgi. Facilitates retrograde transport from the Golgi to the endoplasmic reticulum. This Cryptococcus neoformans var. neoformans serotype D (strain JEC21 / ATCC MYA-565) (Filobasidiella neoformans) protein is Endoplasmic reticulum vesicle protein 25 (ERV25).